We begin with the raw amino-acid sequence, 830 residues long: Penicillin-binding protein 1A (830 aa).

The span at methionine 1–serine 17 shows a compositional bias: basic residues. Residues methionine 1 to asparagine 20 form a disordered region. Topologically, residues methionine 1–tryptophan 30 are cytoplasmic. The chain crosses the membrane as a helical; Signal-anchor for type II membrane protein span at residues phenylalanine 31–leucine 51. The Extracellular portion of the chain corresponds to serine 52–glutamine 830. The tract at residues serine 72–alanine 244 is transglycosylase. Glutamate 111 (proton donor; for transglycosylase activity) is an active-site residue. The tract at residues alanine 378–glycine 663 is transpeptidase. Serine 417 functions as the Acyl-ester intermediate; for transpeptidase activity in the catalytic mechanism. Positions alanine 731–glutamine 830 are disordered. Over residues asparagine 735–asparagine 746 the composition is skewed to low complexity. A compositionally biased stretch (basic and acidic residues) spans lysine 747–proline 758. Composition is skewed to low complexity over residues asparagine 759 to asparagine 807 and glycine 816 to glutamine 830.

This sequence in the N-terminal section; belongs to the glycosyltransferase 51 family. The protein in the C-terminal section; belongs to the transpeptidase family.

Its subcellular location is the cell membrane. It catalyses the reaction [GlcNAc-(1-&gt;4)-Mur2Ac(oyl-L-Ala-gamma-D-Glu-L-Lys-D-Ala-D-Ala)](n)-di-trans,octa-cis-undecaprenyl diphosphate + beta-D-GlcNAc-(1-&gt;4)-Mur2Ac(oyl-L-Ala-gamma-D-Glu-L-Lys-D-Ala-D-Ala)-di-trans,octa-cis-undecaprenyl diphosphate = [GlcNAc-(1-&gt;4)-Mur2Ac(oyl-L-Ala-gamma-D-Glu-L-Lys-D-Ala-D-Ala)](n+1)-di-trans,octa-cis-undecaprenyl diphosphate + di-trans,octa-cis-undecaprenyl diphosphate + H(+). It carries out the reaction Preferential cleavage: (Ac)2-L-Lys-D-Ala-|-D-Ala. Also transpeptidation of peptidyl-alanyl moieties that are N-acyl substituents of D-alanine.. It functions in the pathway cell wall biogenesis; peptidoglycan biosynthesis. In terms of biological role, cell wall formation. Synthesis of cross-linked peptidoglycan from the lipid intermediates. The enzyme has a penicillin-insensitive transglycosylase N-terminal domain (formation of linear glycan strands) and a penicillin-sensitive transpeptidase C-terminal domain (cross-linking of the peptide subunits). In Clostridium perfringens (strain ATCC 13124 / DSM 756 / JCM 1290 / NCIMB 6125 / NCTC 8237 / Type A), this protein is Penicillin-binding protein 1A (pbpA).